Consider the following 233-residue polypeptide: tRNA1(Val) (adenine(37)-N6)-methyltransferase (233 aa).

It belongs to the methyltransferase superfamily. tRNA (adenine-N(6)-)-methyltransferase family.

The protein localises to the cytoplasm. The enzyme catalyses adenosine(37) in tRNA1(Val) + S-adenosyl-L-methionine = N(6)-methyladenosine(37) in tRNA1(Val) + S-adenosyl-L-homocysteine + H(+). Functionally, specifically methylates the adenine in position 37 of tRNA(1)(Val) (anticodon cmo5UAC). In Shewanella amazonensis (strain ATCC BAA-1098 / SB2B), this protein is tRNA1(Val) (adenine(37)-N6)-methyltransferase.